The primary structure comprises 310 residues: Zinc finger protein unc-98 (310 aa).

Residues 73-84 (GSSSAQTPTKSS) show a composition bias toward polar residues. Residues 73-102 (GSSSAQTPTKSSGGALDGSDQQEVRQDGTS) form a disordered region. 2 C2H2-type zinc fingers span residues 113–135 (YKCR…ERIH) and 141–163 (YVCG…AAQH). Residues 169–188 (YKCECGRTFFSYTEMLYHKH) form a C2H2-type 3; degenerate zinc finger. Residues 198–310 (APETTTIKVS…RTSGYVTPRF (113 aa)) are interaction with myo-3. The C2H2-type 4 zinc-finger motif lies at 246-268 (YICEYCSKSYSDSRGLAYHMYSH).

As to quaternary structure, interacts with hum-6, mep-1, myo-3, unc-96 and unc-97/PINCH. Expressed in embryos from 1.5- to 2-fold stage in myofibrils. In larvae and adults, it is expressed in body wall muscle, and in addition, anal depressor muscle and vulval muscles. More specifically it is found in the thick filaments of muscle fibers.

It localises to the nucleus. It is found in the cytoplasm. Probable transcription factor required for muscle structure. Its dual subcellular localization suggests that it may function both as a muscle adhesion complex protein and as a transcription factor, or work together with transcription factors, to influence gene expression. Thought to act as a molecular bridge between unc-97 and myo-3 at the M-line of muscles, possibly in a signaling role. Plays a role in the formation of muscle connections, also called muscle arm extensions, between the body wall and the motor axons in the dorsal and ventral cord. This chain is Zinc finger protein unc-98 (unc-98), found in Caenorhabditis elegans.